Reading from the N-terminus, the 409-residue chain is Arginine deiminase (409 aa).

Cysteine 399 functions as the Amidino-cysteine intermediate in the catalytic mechanism.

Belongs to the arginine deiminase family.

The protein resides in the cytoplasm. The enzyme catalyses L-arginine + H2O = L-citrulline + NH4(+). Its pathway is amino-acid degradation; L-arginine degradation via ADI pathway; carbamoyl phosphate from L-arginine: step 1/2. The protein is Arginine deiminase of Streptococcus gordonii (strain Challis / ATCC 35105 / BCRC 15272 / CH1 / DL1 / V288).